A 344-amino-acid chain; its full sequence is Putative glycosyltransferase EpsH (344 aa).

The protein belongs to the glycosyltransferase 2 family.

In terms of biological role, may be involved in the production of the exopolysaccharide (EPS) component of the extracellular matrix during biofilm formation. EPS is responsible for the adhesion of chains of cells into bundles. Required for biofilm maintenance. The sequence is that of Putative glycosyltransferase EpsH (epsH) from Bacillus subtilis (strain 168).